A 390-amino-acid polypeptide reads, in one-letter code: GTPase Obg (390 aa).

Residues 1–159 form the Obg domain; that stretch reads MKFVDEAAIL…RELMLELLLL (159 aa). One can recognise an OBG-type G domain in the interval 160–333; sequence ADVGMLGLPN…LCWDVMSFLN (174 aa). GTP contacts are provided by residues 166–173, 191–195, 213–216, 283–286, and 314–316; these read GLPNAGKS, FTTLI, DIPG, NKID, and SAA. 2 residues coordinate Mg(2+): serine 173 and threonine 193. The segment covering 364 to 384 has biased composition (acidic residues); the sequence is VEAEAEDDWDDDWDEEDDDGV. Residues 364 to 390 form a disordered region; the sequence is VEAEAEDDWDDDWDEEDDDGVEIIYER.

The protein belongs to the TRAFAC class OBG-HflX-like GTPase superfamily. OBG GTPase family. Monomer. Requires Mg(2+) as cofactor.

It localises to the cytoplasm. Functionally, an essential GTPase which binds GTP, GDP and possibly (p)ppGpp with moderate affinity, with high nucleotide exchange rates and a fairly low GTP hydrolysis rate. Plays a role in control of the cell cycle, stress response, ribosome biogenesis and in those bacteria that undergo differentiation, in morphogenesis control. In Yersinia pestis, this protein is GTPase Obg.